The following is a 198-amino-acid chain: Remorin (198 aa).

The segment covering 1–11 (MAELEAKKVEI) has biased composition (basic and acidic residues). The interval 1-24 (MAELEAKKVEIVDPAPPAPGPVEA) is disordered. Positions 97 to 184 (EESEKSKAEN…LKAEELAAKY (88 aa)) form a coiled coil.

Belongs to the remorin family. The N-terminus is blocked. Post-translationally, phosphorylated.

The protein resides in the cell membrane. Functionally, binds to both simple and complex galacturonides. May be involved in cell-to-cell signaling and molecular transport. The polypeptide is Remorin (Solanum tuberosum (Potato)).